The following is a 375-amino-acid chain: Chaperone protein DnaJ (375 aa).

Positions 5-70 constitute a J domain; it reads DYYEILGISK…EKRAAYDQYG (66 aa). The CR-type zinc-finger motif lies at 130–208; the sequence is GIIKEICIPT…CHGNGRVERS (79 aa). Cys143, Cys146, Cys160, Cys163, Cys182, Cys185, Cys196, and Cys199 together coordinate Zn(2+). 4 CXXCXGXG motif repeats span residues 143 to 150, 160 to 167, 182 to 189, and 196 to 203; these read CEKCRGTG, CMTCHGQG, CPTCHGHG, and CNKCHGNG.

It belongs to the DnaJ family. As to quaternary structure, homodimer. Zn(2+) is required as a cofactor.

The protein resides in the cytoplasm. Functionally, participates actively in the response to hyperosmotic and heat shock by preventing the aggregation of stress-denatured proteins and by disaggregating proteins, also in an autonomous, DnaK-independent fashion. Unfolded proteins bind initially to DnaJ; upon interaction with the DnaJ-bound protein, DnaK hydrolyzes its bound ATP, resulting in the formation of a stable complex. GrpE releases ADP from DnaK; ATP binding to DnaK triggers the release of the substrate protein, thus completing the reaction cycle. Several rounds of ATP-dependent interactions between DnaJ, DnaK and GrpE are required for fully efficient folding. Also involved, together with DnaK and GrpE, in the DNA replication of plasmids through activation of initiation proteins. The chain is Chaperone protein DnaJ from Blochmanniella pennsylvanica (strain BPEN).